Reading from the N-terminus, the 191-residue chain is Orotate phosphoribosyltransferase (191 aa).

A 5-phospho-alpha-D-ribose 1-diphosphate-binding site is contributed by 114–122; sequence EDVITTGGS. Orotate-binding residues include T118 and R146.

Belongs to the purine/pyrimidine phosphoribosyltransferase family. PyrE subfamily. As to quaternary structure, homodimer. Mg(2+) is required as a cofactor.

It catalyses the reaction orotidine 5'-phosphate + diphosphate = orotate + 5-phospho-alpha-D-ribose 1-diphosphate. The protein operates within pyrimidine metabolism; UMP biosynthesis via de novo pathway; UMP from orotate: step 1/2. Catalyzes the transfer of a ribosyl phosphate group from 5-phosphoribose 1-diphosphate to orotate, leading to the formation of orotidine monophosphate (OMP). This chain is Orotate phosphoribosyltransferase, found in Desulforamulus reducens (strain ATCC BAA-1160 / DSM 100696 / MI-1) (Desulfotomaculum reducens).